The chain runs to 151 residues: MPHRSRHKKGRSRSVRPAHPTVPTWIQYTPDEVEQLVVELARRGFPPSQIGIILRDQYGIPLVKPITGKKLTKILEEHGIRQEIPEDLLNLIKRALRIRKHLEEHPKDMASRRGLQLVESKIHRLIKYYKRVGKLPKEFVYNPEALSHLAT.

Basic residues predominate over residues 1–16 (MPHRSRHKKGRSRSVR). The segment at 1-21 (MPHRSRHKKGRSRSVRPAHPT) is disordered.

The protein belongs to the universal ribosomal protein uS15 family. As to quaternary structure, part of the 30S ribosomal subunit.

The polypeptide is Small ribosomal subunit protein uS15 (Pyrobaculum islandicum (strain DSM 4184 / JCM 9189 / GEO3)).